We begin with the raw amino-acid sequence, 605 residues long: UvrABC system protein C (605 aa).

One can recognise a GIY-YIG domain in the interval 15 to 92 (GLPGCYLMKN…IQKHQPYFNI (78 aa)). The region spanning 197–232 (GHAKKDLTQRMEKAAADMAYERAGDLRDQIRYIEAT) is the UVR domain.

It belongs to the UvrC family. In terms of assembly, interacts with UvrB in an incision complex.

The protein localises to the cytoplasm. Functionally, the UvrABC repair system catalyzes the recognition and processing of DNA lesions. UvrC both incises the 5' and 3' sides of the lesion. The N-terminal half is responsible for the 3' incision and the C-terminal half is responsible for the 5' incision. The polypeptide is UvrABC system protein C (Levilactobacillus brevis (strain ATCC 367 / BCRC 12310 / CIP 105137 / JCM 1170 / LMG 11437 / NCIMB 947 / NCTC 947) (Lactobacillus brevis)).